The sequence spans 506 residues: NAD(P)H-quinone oxidoreductase chain 4, chloroplastic (506 aa).

A run of 14 helical transmembrane segments spans residues 5-25 (FPLLTFITLFPISAGLLIPFL), 35-55 (WYTLIICLIDFVITSYIFIYK), 88-108 (MPLILLTSFITTLATLSAWPI), 114-134 (LFYFLMLAMYSGQLGVFLSQD), 135-155 (ILLFFLMWELELIPIYLLLSL), 168-188 (FILYTAVGSIFILMAGLTMAF), 209-229 (ALEIVLYLGFLIAFAVKLPAF), 243-263 (HYSTCMLLAGILIKMGGYGLI), 275-295 (VIFSPWIALIGGIQIIYGALT), 309-329 (SSISHMGFVMIGISSFTDLGL), 331-351 (GAMMQMVSHGLIGAGLFFLAG), 386-406 (SLALPGMSGFVAELMVFLGFL), 415-435 (FIALITFLEAVGIILTPIYLL), and 463-483 (IFIMSCLFLPIIGIGIYPNLT).

The protein belongs to the complex I subunit 4 family.

Its subcellular location is the plastid. The protein localises to the chloroplast thylakoid membrane. The enzyme catalyses a plastoquinone + NADH + (n+1) H(+)(in) = a plastoquinol + NAD(+) + n H(+)(out). It carries out the reaction a plastoquinone + NADPH + (n+1) H(+)(in) = a plastoquinol + NADP(+) + n H(+)(out). In Chaetosphaeridium globosum (Charophycean green alga), this protein is NAD(P)H-quinone oxidoreductase chain 4, chloroplastic.